The primary structure comprises 508 residues: Transcription termination factor MTERF4, chloroplastic (508 aa).

The N-terminal 79 residues, 1–79, are a transit peptide targeting the chloroplast; sequence MMKSLFLFSA…PSLLDMERGR (79 aa). Positions 28–49 are enriched in low complexity; the sequence is RLTASASTSASSPPRAGCSRGP. Disordered regions lie at residues 28-69 and 475-508; these read RLTA…LYAR and FDTN…EFIE. Over residues 484–508 the composition is skewed to acidic residues; sequence VEDEVEDEDLDEDSDYDSTDDEFIE.

The protein belongs to the mTERF family.

The protein localises to the plastid. It localises to the chloroplast stroma. Functionally, transcription termination factor required for processing and steady-state levels of plastid transcripts. Required for splicing of the chloroplastic group II intron. Required for the accumulation of 16S and 23S ribosomes. This Oryza sativa subsp. japonica (Rice) protein is Transcription termination factor MTERF4, chloroplastic.